Reading from the N-terminus, the 287-residue chain is Protease HtpX (287 aa).

A run of 2 helical transmembrane segments spans residues isoleucine 4–isoleucine 24 and glycine 33–isoleucine 53. Histidine 139 serves as a coordination point for Zn(2+). Glutamate 140 is a catalytic residue. Residue histidine 143 participates in Zn(2+) binding. The next 2 membrane-spanning stretches (helical) occupy residues leucine 154–isoleucine 174 and alanine 195–phenylalanine 215. Residue glutamate 220 coordinates Zn(2+).

The protein belongs to the peptidase M48B family. Zn(2+) is required as a cofactor.

It is found in the cell inner membrane. This is Protease HtpX from Shewanella frigidimarina (strain NCIMB 400).